The chain runs to 129 residues: Lysozyme C (129 aa).

The 129-residue stretch at 1-129 (KVYGRCELAA…VHAWIRGCRL (129 aa)) folds into the C-type lysozyme domain. 4 disulfides stabilise this stretch: C6–C127, C30–C115, C64–C80, and C76–C94. Residues E35 and D52 contribute to the active site.

Belongs to the glycosyl hydrolase 22 family. As to quaternary structure, monomer.

The protein resides in the secreted. The enzyme catalyses Hydrolysis of (1-&gt;4)-beta-linkages between N-acetylmuramic acid and N-acetyl-D-glucosamine residues in a peptidoglycan and between N-acetyl-D-glucosamine residues in chitodextrins.. Its function is as follows. Lysozymes have primarily a bacteriolytic function; those in tissues and body fluids are associated with the monocyte-macrophage system and enhance the activity of immunoagents. The chain is Lysozyme C (LYZ) from Tragopan temminckii (Temminck's tragopan).